The sequence spans 263 residues: MARDRRDYYYRQAKEEGYRSRASFKLKQINERHHIINRGDSVVDLGAAPGGWLQVAKELSGGKVLGVDLQRIVPIEGVETIQGNINADSTIQKIIKTVGAKGADVVLCDAAPNLSGNWSYDHARSIELATSALECAKKILKPKGNFVVKVFQGDMFNDYMQKVRDNFVRTMAYSPKASRSQSAEIYVIGKKFLTAPLRKGDKFVVDIEKLGSSGDGAVLIEGFVVFVKEVEVGEKVRIKITDVKPNFAFADVAERLGKTEKPE.

Positions 50, 52, 68, 84, and 109 each coordinate S-adenosyl-L-methionine. Lys149 acts as the Proton acceptor in catalysis. The TRAM domain occupies 196-254 (PLRKGDKFVVDIEKLGSSGDGAVLIEGFVVFVKEVEVGEKVRIKITDVKPNFAFADVAE).

It belongs to the class I-like SAM-binding methyltransferase superfamily. RNA methyltransferase RlmE family.

The protein localises to the cytoplasm. The catalysed reaction is uridine(2552) in 23S rRNA + S-adenosyl-L-methionine = 2'-O-methyluridine(2552) in 23S rRNA + S-adenosyl-L-homocysteine + H(+). Its function is as follows. Specifically methylates the uridine in position 2552 of 23S rRNA at the 2'-O position of the ribose in the fully assembled 50S ribosomal subunit. This is Ribosomal RNA large subunit methyltransferase E from Methanosarcina barkeri (strain Fusaro / DSM 804).